A 208-amino-acid polypeptide reads, in one-letter code: Ribosomal RNA small subunit methyltransferase G (208 aa).

Residues Gly74, Leu79, Val125–Glu126, and Arg140 contribute to the S-adenosyl-L-methionine site.

The protein belongs to the methyltransferase superfamily. RNA methyltransferase RsmG family.

The protein resides in the cytoplasm. It catalyses the reaction guanosine(527) in 16S rRNA + S-adenosyl-L-methionine = N(7)-methylguanosine(527) in 16S rRNA + S-adenosyl-L-homocysteine. Its function is as follows. Specifically methylates the N7 position of guanine in position 527 of 16S rRNA. This Shewanella denitrificans (strain OS217 / ATCC BAA-1090 / DSM 15013) protein is Ribosomal RNA small subunit methyltransferase G.